Here is a 1645-residue protein sequence, read N- to C-terminus: Histone-lysine N-methyltransferase set-26 (1645 aa).

5 disordered regions span residues 1–82 (MADG…QQIP), 109–132 (EPAAAADSRPLTEEEQLAAERPTE), 200–228 (DAVGPGSPGTQYRRNQQTGGGLPSTSVAP), 417–606 (TPEQ…VLRP), and 651–789 (TGQS…DEAA). 2 stretches are compositionally biased toward low complexity: residues 16–31 (EQPPLQQQQPEIAEPI) and 67–82 (QEFYQEPQIPEPQQIP). Polar residues predominate over residues 207–228 (PGTQYRRNQQTGGGLPSTSVAP). Composition is skewed to low complexity over residues 429–443 (RQRAAPQFPAAAAQR) and 453–467 (RPGASSSRAPRPSMA). Positions 559-578 (MTQEEKNAHFARLTTDKEKP) are enriched in basic and acidic residues. The segment covering 592–603 (PHVPPPPPPPLV) has biased composition (pro residues). Positions 651-675 (TGQSGSSAAARQRTVSGSAARAQTY) are enriched in polar residues. 2 stretches are compositionally biased toward basic residues: residues 684-699 (QHHHQMPMDQRKRHSS) and 731-741 (HRPRGRPKGTR). Acidic residues predominate over residues 780–789 (SESEGIDEAA). A PHD-type zinc finger spans residues 794 to 842 (TMRCHCGMDHGDGDTIECEGCKTWQHMACMGLTLKSNTSKYKCEMCLPR). A disordered region spans residues 865–904 (AAKKQKRKSEPVEQKQKSQPSTSRKSAPMALQQQPAEPRV). A compositionally biased stretch (polar residues) spans 881–899 (KSQPSTSRKSAPMALQQQP). The SET domain occupies 973–1064 (MSNEVKRQPG…RNTEVTLPFD (92 aa)). Basic and acidic residues predominate over residues 1099 to 1172 (RHRAMDHKKR…EAKERKKMEV (74 aa)). Disordered stretches follow at residues 1099-1333 (RHRA…SKNV), 1371-1536 (SGLL…STEG), and 1548-1645 (PLDD…TRWN). The stretch at 1103 to 1217 (MDHKKREAEE…GKRKEARRRS (115 aa)) forms a coiled coil. Residues 1173-1183 (EASAAAAPESS) show a composition bias toward low complexity. Over residues 1188–1210 (AREERRIQQAEEMFRRQEEEGKR) the composition is skewed to basic and acidic residues. Polar residues-rich tracts occupy residues 1258-1268 (TTQPSTSSFAT) and 1300-1311 (TVATPKDTTASN). 3 stretches are compositionally biased toward basic and acidic residues: residues 1382-1427 (SEVR…KKAN), 1434-1450 (KSEKAVEKAVEKVEKKP), and 1468-1485 (KKTEEVDGIEREASESSS). A compositionally biased stretch (polar residues) spans 1554–1565 (SSSNTAPTTTIA).

The protein belongs to the class V-like SAM-binding methyltransferase superfamily. As to expression, expressed both in the germline and in somatic tissues.

The protein resides in the nucleus. The catalysed reaction is L-lysyl(9)-[histone H3] + 3 S-adenosyl-L-methionine = N(6),N(6),N(6)-trimethyl-L-lysyl(9)-[histone H3] + 3 S-adenosyl-L-homocysteine + 3 H(+). Its function is as follows. Histone methyltransferase that mediates trimethylation of 'Lys-9' of histone H3 in vitro. Involved in transcriptional regulation. Plays a role in the negative regulation of lifespan and in heat resistance. Together with set-9, negatively regulates lifespan in a germline-independent, partially daf-16-dependent fashion. Together with set-9, plays a role in germline development and maintenance and might play a role in the restriction of the trimethylation mark on histone H3 'Lys-4'(H3K4me3) to target genes specifically in the germline. Together with spr-5, required for transgenerational fertility. In Caenorhabditis elegans, this protein is Histone-lysine N-methyltransferase set-26.